The sequence spans 122 residues: Large ribosomal subunit protein bL12 (122 aa).

The protein belongs to the bacterial ribosomal protein bL12 family. Homodimer. Part of the ribosomal stalk of the 50S ribosomal subunit. Forms a multimeric L10(L12)X complex, where L10 forms an elongated spine to which 2 to 4 L12 dimers bind in a sequential fashion. Binds GTP-bound translation factors.

In terms of biological role, forms part of the ribosomal stalk which helps the ribosome interact with GTP-bound translation factors. Is thus essential for accurate translation. The polypeptide is Large ribosomal subunit protein bL12 (Flavobacterium psychrophilum (strain ATCC 49511 / DSM 21280 / CIP 103535 / JIP02/86)).